A 415-amino-acid chain; its full sequence is 6-phospho-beta-glucosidase BglT (415 aa).

1–64 (MRIAVIGGGS…DRFKVLISDT (64 aa)) contributes to the NAD(+) binding site. Substrate is bound by residues Arg-87 and Asn-140. Cys-162 serves as a coordination point for Mn(2+). Substrate is bound at residue Asn-163. Mn(2+) is bound at residue His-192. Tyr-241 serves as the catalytic Proton acceptor. Arg-261 is a substrate binding site.

The protein belongs to the glycosyl hydrolase 4 family. As to quaternary structure, homodimer or homotetramer. Exists in a homodimer/homotetramer equilibrium state in solution. The cofactor is NAD(+). It depends on Mn(2+) as a cofactor.

The enzyme catalyses 6-phospho-beta-D-glucosyl-(1-&gt;4)-D-glucose + H2O = D-glucose 6-phosphate + D-glucose. Functionally, hydrolyzes cellobiose 6'-phosphate into glucose 6-phosphate (Glc6P) and glucose. The protein is 6-phospho-beta-glucosidase BglT (bglT) of Thermotoga maritima (strain ATCC 43589 / DSM 3109 / JCM 10099 / NBRC 100826 / MSB8).